The following is a 223-amino-acid chain: MNDYSQLEKRLNYTFKDKQLIIEALTHKSYKKPYNNERLEFLGDAVLDLIVGEYLFKKFPKSDEGILSKIRASLVNESGFTLLARKIDLGSYIYLSLAEENNNGRDKPSLLSNAFEAIIGAVYLEAGLDTAKEISIKLLEECHPKIDLQSLSKDYKTALQELTQATHAVTPGYEMLGSSGPDHKKEFEIAVTLDNKTIATAKGKSKKDAQQKAAKIALEALKK.

The 124-residue stretch at Tyr4–Gly127 folds into the RNase III domain. Glu40 serves as a coordination point for Mg(2+). Asp44 is a catalytic residue. 2 residues coordinate Mg(2+): Asn113 and Glu116. Glu116 is an active-site residue. Positions Asp154–Lys223 constitute a DRBM domain.

Belongs to the ribonuclease III family. As to quaternary structure, homodimer. Mg(2+) is required as a cofactor.

Its subcellular location is the cytoplasm. The catalysed reaction is Endonucleolytic cleavage to 5'-phosphomonoester.. Digests double-stranded RNA. Involved in the processing of primary rRNA transcript to yield the immediate precursors to the large and small rRNAs (23S and 16S). Processes some mRNAs, and tRNAs when they are encoded in the rRNA operon. Processes pre-crRNA and tracrRNA of type II CRISPR loci if present in the organism. The polypeptide is Ribonuclease 3 (Sulfurovum sp. (strain NBC37-1)).